Consider the following 99-residue polypeptide: High mobility group nucleosome-binding domain-containing protein 3 (99 aa).

Basic and acidic residues-rich tracts occupy residues 1–25, 39–53, and 62–72; these read MPKR…EPTR, PEPK…KEPG, and GKKEEKQEAGK. The segment at 1–99 is disordered; it reads MPKRKSPENT…KTESVDNEGE (99 aa). Serine 6 bears the Phosphoserine mark. Threonine 10 carries the phosphothreonine modification. Residues serine 78 and serine 93 each carry the phosphoserine modification. Residues 81-93 show a composition bias toward basic and acidic residues; sequence GETKAEEAQKTES.

This sequence belongs to the HMGN family. In terms of assembly, interacts with the ligand binding domain of the thyroid receptor (TR) (in vitro). Requires the presence of thyroid hormone for its interaction. Interacts with transcriptional regulator SEHBP. Interacts with nucleosomes. Expressed in kidney, lung, pancreas, testis, skeletal muscle, heart, thyroid gland, pituitary gland, prostate and uterus. Low expression in liver, spleen, placenta and ovaries.

The protein localises to the nucleus. In terms of biological role, binds to nucleosomes, regulating chromatin structure and consequently, chromatin-dependent processes such as transcription, DNA replication and DNA repair. Affects both insulin and glucagon levels and modulates the expression of pancreatic genes involved in insulin secretion. Regulates the expression of the glucose transporter SLC2A2 by binding specifically to its promoter region and recruiting PDX1 and additional transcription factors. Regulates the expression of SLC6A9, a glycine transporter which regulates the glycine concentration in synaptic junctions in the central nervous system, by binding to its transcription start site. May play a role in ocular development and astrocyte function. This chain is High mobility group nucleosome-binding domain-containing protein 3 (HMGN3), found in Homo sapiens (Human).